The primary structure comprises 192 residues: Thymidine kinase (192 aa).

ATP is bound by residues 9-16 (STMNAGKS) and 87-90 (DEAQ). The active-site Proton acceptor is the E88. 4 residues coordinate Zn(2+): C145, C147, C182, and H185.

The protein belongs to the thymidine kinase family. As to quaternary structure, homotetramer.

The protein resides in the cytoplasm. It catalyses the reaction thymidine + ATP = dTMP + ADP + H(+). The sequence is that of Thymidine kinase from Pasteurella multocida (strain Pm70).